The sequence spans 362 residues: 2-aminoethylphosphonate--pyruvate transaminase (362 aa).

Lys-193 bears the N6-(pyridoxal phosphate)lysine mark.

Belongs to the class-V pyridoxal-phosphate-dependent aminotransferase family. PhnW subfamily. As to quaternary structure, homodimer. Pyridoxal 5'-phosphate is required as a cofactor.

It carries out the reaction (2-aminoethyl)phosphonate + pyruvate = phosphonoacetaldehyde + L-alanine. In terms of biological role, involved in phosphonate degradation. The polypeptide is 2-aminoethylphosphonate--pyruvate transaminase (Phocaeicola vulgatus (strain ATCC 8482 / DSM 1447 / JCM 5826 / CCUG 4940 / NBRC 14291 / NCTC 11154) (Bacteroides vulgatus)).